Here is a 343-residue protein sequence, read N- to C-terminus: Glyceraldehyde-3-phosphate dehydrogenase (343 aa).

Residues 11–12 (TI) and glycine 110 each bind NAD(+). 139–141 (SCN) contributes to the D-glyceraldehyde 3-phosphate binding site. Cysteine 140 functions as the Nucleophile in the catalytic mechanism. Arginine 168 contributes to the NAD(+) binding site. 194 to 195 (HG) contributes to the D-glyceraldehyde 3-phosphate binding site. Glutamine 301 serves as a coordination point for NAD(+).

Belongs to the glyceraldehyde-3-phosphate dehydrogenase family. In terms of assembly, homotetramer.

The protein localises to the cytoplasm. The enzyme catalyses D-glyceraldehyde 3-phosphate + phosphate + NADP(+) = (2R)-3-phospho-glyceroyl phosphate + NADPH + H(+). The catalysed reaction is D-glyceraldehyde 3-phosphate + phosphate + NAD(+) = (2R)-3-phospho-glyceroyl phosphate + NADH + H(+). Its pathway is carbohydrate degradation; glycolysis; pyruvate from D-glyceraldehyde 3-phosphate: step 1/5. This chain is Glyceraldehyde-3-phosphate dehydrogenase, found in Methanoregula boonei (strain DSM 21154 / JCM 14090 / 6A8).